Consider the following 238-residue polypeptide: Ribonuclease PH (238 aa).

Residues R86 and 124 to 126 contribute to the phosphate site; that span reads GTR.

The protein belongs to the RNase PH family. Homodimer. Has a tendency to aggregate into multimers. The cofactor is Mg(2+).

The enzyme catalyses tRNA(n+1) + phosphate = tRNA(n) + a ribonucleoside 5'-diphosphate. Phosphorolytic exoribonuclease that plays an important role in tRNA 3'-end maturation; has no activity on a tRNA precursor with a 3'-terminal phosphate group. In vitro is freely reversible, adds nucleotides to the ends of RNA molecules by using nucleoside diphosphates as substrates, but this may not be physiologically important. Probably plays a role in initiation of 16S rRNA degradation (leading to ribosome degradation) during starvation. The polypeptide is Ribonuclease PH (Escherichia coli (strain K12 / MC4100 / BW2952)).